A 308-amino-acid chain; its full sequence is Glutaminase (308 aa).

Positions 66, 117, 161, 168, 192, 244, and 262 each coordinate substrate.

Belongs to the glutaminase family. Homotetramer.

It catalyses the reaction L-glutamine + H2O = L-glutamate + NH4(+). The chain is Glutaminase from Klebsiella pneumoniae subsp. pneumoniae (strain ATCC 700721 / MGH 78578).